The primary structure comprises 382 residues: uncharacterized protein (382 aa).

The next 12 membrane-spanning stretches (helical) occupy residues 14–34 (GLLL…LWLA), 45–65 (MVSS…GYLI), 75–95 (YLAS…VGFW), 102–122 (FIAG…LMCS), 131–151 (LLAA…LLVS), 157–177 (LLHV…PLLF), 204–224 (LGVN…GLMP), 235–255 (ASIG…QWPV), 265–284 (LLVL…VMLT), 289–311 (APAL…AWAC), 325–345 (ALLL…AMLM), and 349–369 (SDNL…LMLL).

It belongs to the major facilitator superfamily. YcaD (TC 2.A.1.26) family.

The protein resides in the cell inner membrane. This is an uncharacterized protein from Salmonella arizonae (strain ATCC BAA-731 / CDC346-86 / RSK2980).